Reading from the N-terminus, the 466-residue chain is Adenosylhomocysteinase (466 aa).

Residues Thr57, Asp132, and Glu192 each coordinate substrate. 193–195 contributes to the NAD(+) binding site; it reads TTT. Substrate is bound by residues Lys222 and Asp226. NAD(+)-binding positions include Asn227, 256 to 261, Glu279, Asn314, 335 to 337, and Asn380; these read GYGDVG and IGH.

The protein belongs to the adenosylhomocysteinase family. The cofactor is NAD(+).

It localises to the cytoplasm. It carries out the reaction S-adenosyl-L-homocysteine + H2O = L-homocysteine + adenosine. The protein operates within amino-acid biosynthesis; L-homocysteine biosynthesis; L-homocysteine from S-adenosyl-L-homocysteine: step 1/1. Functionally, may play a key role in the regulation of the intracellular concentration of adenosylhomocysteine. This chain is Adenosylhomocysteinase, found in Chromobacterium violaceum (strain ATCC 12472 / DSM 30191 / JCM 1249 / CCUG 213 / NBRC 12614 / NCIMB 9131 / NCTC 9757 / MK).